Consider the following 195-residue polypeptide: 3-isopropylmalate dehydratase small subunit (195 aa).

It belongs to the LeuD family. LeuD type 1 subfamily. In terms of assembly, heterodimer of LeuC and LeuD.

It carries out the reaction (2R,3S)-3-isopropylmalate = (2S)-2-isopropylmalate. It participates in amino-acid biosynthesis; L-leucine biosynthesis; L-leucine from 3-methyl-2-oxobutanoate: step 2/4. Functionally, catalyzes the isomerization between 2-isopropylmalate and 3-isopropylmalate, via the formation of 2-isopropylmaleate. The protein is 3-isopropylmalate dehydratase small subunit of Rubrobacter xylanophilus (strain DSM 9941 / JCM 11954 / NBRC 16129 / PRD-1).